Reading from the N-terminus, the 1111-residue chain is Protein NETWORKED 1C (1111 aa).

Residues 13-93 (YSWWWDSHNT…ERYNHATGVI (81 aa)) form the NAB domain. Coiled coils occupy residues 202 to 287 (SESE…KESS), 314 to 605 (ERAS…LISE), and 642 to 752 (KTIG…LESK). Residues 850 to 870 (TGGGRSMRKQDGGSGRMRKQS) are disordered. Positions 943–1009 (NREVNKRRVL…EGEEAIEKLF (67 aa)) form a coiled coil.

Belongs to the NET family.

In terms of biological role, plant-specific actin binding protein. May be part of a membrane-cytoskeletal adapter complex. The sequence is that of Protein NETWORKED 1C from Arabidopsis thaliana (Mouse-ear cress).